Reading from the N-terminus, the 70-residue chain is Large ribosomal subunit protein bL31 (70 aa).

Cys-16, Cys-18, Cys-38, and Cys-41 together coordinate Zn(2+).

It belongs to the bacterial ribosomal protein bL31 family. Type A subfamily. Part of the 50S ribosomal subunit. Zn(2+) serves as cofactor.

In terms of biological role, binds the 23S rRNA. This is Large ribosomal subunit protein bL31 from Mycolicibacterium gilvum (strain PYR-GCK) (Mycobacterium gilvum (strain PYR-GCK)).